A 129-amino-acid polypeptide reads, in one-letter code: NADH-quinone oxidoreductase subunit A (129 aa).

3 helical membrane-spanning segments follow: residues 9-29 (FPIGVVLLVAVVLAFTMLGLA), 68-88 (LLFIVFDIEAIFLYPWAVLLL), and 97-117 (LGWPGFISMGIFVFTLVAGLV).

It belongs to the complex I subunit 3 family. As to quaternary structure, NDH-1 is composed of 14 different subunits. Subunits NuoA, H, J, K, L, M, N constitute the membrane sector of the complex.

It localises to the cell inner membrane. The enzyme catalyses a quinone + NADH + 5 H(+)(in) = a quinol + NAD(+) + 4 H(+)(out). In terms of biological role, NDH-1 shuttles electrons from NADH, via FMN and iron-sulfur (Fe-S) centers, to quinones in the respiratory chain. The immediate electron acceptor for the enzyme in this species is believed to be ubiquinone. Couples the redox reaction to proton translocation (for every two electrons transferred, four hydrogen ions are translocated across the cytoplasmic membrane), and thus conserves the redox energy in a proton gradient. This is NADH-quinone oxidoreductase subunit A from Anaeromyxobacter dehalogenans (strain 2CP-C).